Reading from the N-terminus, the 1266-residue chain is Formin-like protein 13 (1266 aa).

In terms of domain architecture, Phosphatase tensin-type spans 9 to 193 (YRKPPDGLLE…QYVSRRNLVS (185 aa)). Cys126 acts as the Phosphocysteine intermediate in catalysis. The 139-residue stretch at 199–337 (DRALTMDCVI…FRVELLFSDM (139 aa)) folds into the C2 tensin-type domain. Disordered stretches follow at residues 497–568 (KPLV…LQHS), 597–825 (KNLI…GKGR), 881–902 (SASA…PKPE), and 1210–1266 (QLEA…RTAP). A compositionally biased stretch (pro residues) spans 529–538 (PPTPSPPHPV). A compositionally biased stretch (polar residues) spans 617–644 (EPSSKTTNSLLLSPQASPATPTNPSKTV). Pro residues-rich tracts occupy residues 686 to 698 (LPRP…PPPM), 706 to 742 (VPPP…PPTP), 754 to 781 (PPAP…PPPL), and 806 to 815 (PNVPPTPALP). Residues 829–1226 (VNLKNSPAKK…KNAAEKEKPK (398 aa)) form the FH2 domain. Basic and acidic residues-rich tracts occupy residues 889 to 902 (GKSR…PKPE), 1210 to 1248 (QLEA…EKTK), and 1255 to 1266 (EMSDRLKERTAP).

This sequence belongs to the formin-like family. Class-II subfamily.

This Arabidopsis thaliana (Mouse-ear cress) protein is Formin-like protein 13 (FH13).